Reading from the N-terminus, the 355-residue chain is F-box protein At1g31080 (355 aa).

Residues 4-49 (GANSASIPNDLILEILSRLPAKSTGRFRCVSKLWGSMLCHSYFTEL) form the F-box domain. A compositionally biased stretch (polar residues) spans 306 to 320 (AGTSRSPPKQSTSTS). The disordered stretch occupies residues 306–333 (AGTSRSPPKQSTSTSSREDHEVRTLAHQ). Residues 321 to 333 (SREDHEVRTLAHQ) show a composition bias toward basic and acidic residues.

This is F-box protein At1g31080 from Arabidopsis thaliana (Mouse-ear cress).